A 126-amino-acid polypeptide reads, in one-letter code: Histone H2B type 1-K (126 aa).

A compositionally biased stretch (low complexity) spans 1–12 (MPEPAKSAPAPK). Residues 1–36 (MPEPAKSAPAPKKGSKKAVTKAQKKDGKKRKRSRKE) form a disordered region. Residue Pro2 is modified to N-acetylproline. Glu3 bears the ADP-ribosyl glutamic acid mark. Residue Lys6 is modified to N6-(2-hydroxyisobutyryl)lysine; alternate. Lys6 is subject to N6-(beta-hydroxybutyryl)lysine; alternate. Position 6 is an N6-acetyllysine; alternate (Lys6). At Lys6 the chain carries N6-butyryllysine; alternate. Lys6 is subject to N6-crotonyllysine; alternate. Lys6 is subject to N6-lactoyllysine; alternate. Residue Lys6 forms a Glycyl lysine isopeptide (Lys-Gly) (interchain with G-Cter in SUMO2); alternate linkage. Ser7 is modified (ADP-ribosylserine). Lys12 bears the N6-(beta-hydroxybutyryl)lysine; alternate mark. N6-acetyllysine; alternate is present on residues Lys12 and Lys13. N6-crotonyllysine; alternate is present on residues Lys12 and Lys13. N6-lactoyllysine; alternate is present on Lys12. Lys13 is subject to N6-(2-hydroxyisobutyryl)lysine; alternate. Phosphoserine; by STK4/MST1 is present on Ser15. Residues Lys16, Lys17, Lys21, and Lys24 each carry the N6-acetyllysine; alternate modification. Lys16, Lys17, Lys21, and Lys24 each carry N6-crotonyllysine; alternate. 4 positions are modified to N6-lactoyllysine; alternate: Lys16, Lys17, Lys21, and Lys24. Lys17 bears the N6-glutaryllysine; alternate mark. N6-(2-hydroxyisobutyryl)lysine; alternate is present on residues Lys21 and Lys24. At Lys21 the chain carries N6-(beta-hydroxybutyryl)lysine; alternate. N6-butyryllysine; alternate is present on Lys21. Residue Lys21 forms a Glycyl lysine isopeptide (Lys-Gly) (interchain with G-Cter in SUMO2); alternate linkage. An N6-(2-hydroxyisobutyryl)lysine modification is found at Lys25. N6-(2-hydroxyisobutyryl)lysine; alternate is present on Lys35. The residue at position 35 (Lys35) is an N6-(beta-hydroxybutyryl)lysine; alternate. Lys35 carries the N6-crotonyllysine; alternate modification. The residue at position 35 (Lys35) is an N6-glutaryllysine; alternate. At Lys35 the chain carries N6-succinyllysine; alternate. Lys35 is covalently cross-linked (Glycyl lysine isopeptide (Lys-Gly) (interchain with G-Cter in ubiquitin); alternate). PolyADP-ribosyl glutamic acid is present on Glu36. Position 37 is a phosphoserine; by AMPK (Ser37). N6-(2-hydroxyisobutyryl)lysine; alternate is present on residues Lys44, Lys47, and Lys58. Lys44 carries the N6-lactoyllysine; alternate modification. N6-glutaryllysine; alternate occurs at positions 44 and 47. Lys47 carries the post-translational modification N6-methyllysine; alternate. Lys58 bears the N6,N6-dimethyllysine; alternate mark. Arg80 carries the post-translational modification Dimethylated arginine. Position 86 is an N6-(2-hydroxyisobutyryl)lysine; alternate (Lys86). Lys86 carries the N6-acetyllysine; alternate modification. Lys86 bears the N6-lactoyllysine; alternate mark. Position 86 is an N6,N6,N6-trimethyllysine; alternate (Lys86). 2 positions are modified to omega-N-methylarginine: Arg87 and Arg93. Lys109 carries the N6-(2-hydroxyisobutyryl)lysine; alternate modification. N6-lactoyllysine; alternate is present on Lys109. N6-glutaryllysine; alternate is present on Lys109. Position 109 is an N6-methyllysine; alternate (Lys109). A glycan (O-linked (GlcNAc) serine) is linked at Ser113. Phosphothreonine is present on Thr116. N6-(2-hydroxyisobutyryl)lysine; alternate is present on residues Lys117 and Lys121. An N6-(beta-hydroxybutyryl)lysine; alternate modification is found at Lys117. N6-lactoyllysine; alternate occurs at positions 117 and 121. Residues Lys117 and Lys121 each carry the N6-glutaryllysine; alternate modification. An N6-succinyllysine; alternate mark is found at Lys117 and Lys121. At Lys117 the chain carries N6-methylated lysine; alternate. Residue Lys121 forms a Glycyl lysine isopeptide (Lys-Gly) (interchain with G-Cter in ubiquitin); alternate linkage.

This sequence belongs to the histone H2B family. In terms of assembly, the nucleosome is a histone octamer containing two molecules each of H2A, H2B, H3 and H4 assembled in one H3-H4 heterotetramer and two H2A-H2B heterodimers. The octamer wraps approximately 147 bp of DNA. Post-translationally, monoubiquitination at Lys-35 (H2BK34Ub) by the MSL1/MSL2 dimer is required for histone H3 'Lys-4' (H3K4me) and 'Lys-79' (H3K79me) methylation and transcription activation at specific gene loci, such as HOXA9 and MEIS1 loci. Similarly, monoubiquitination at Lys-121 (H2BK120Ub) by the RNF20/40 complex gives a specific tag for epigenetic transcriptional activation and is also prerequisite for histone H3 'Lys-4' and 'Lys-79' methylation. It also functions cooperatively with the FACT dimer to stimulate elongation by RNA polymerase II. H2BK120Ub also acts as a regulator of mRNA splicing: deubiquitination by USP49 is required for efficient cotranscriptional splicing of a large set of exons. Phosphorylated on Ser-15 (H2BS14ph) by STK4/MST1 during apoptosis; which facilitates apoptotic chromatin condensation. Also phosphorylated on Ser-15 in response to DNA double strand breaks (DSBs), and in correlation with somatic hypermutation and immunoglobulin class-switch recombination. Phosphorylation at Ser-37 (H2BS36ph) by AMPK in response to stress promotes transcription. In terms of processing, glcNAcylation at Ser-113 promotes monoubiquitination of Lys-121. It fluctuates in response to extracellular glucose, and associates with transcribed genes. Post-translationally, ADP-ribosylated by PARP1 or PARP2 on Ser-7 (H2BS6ADPr) in response to DNA damage. H2BS6ADPr promotes recruitment of CHD1L. Mono-ADP-ribosylated on Glu-3 (H2BE2ADPr) by PARP3 in response to single-strand breaks. Poly ADP-ribosylation on Glu-36 (H2BE35ADPr) by PARP1 regulates adipogenesis: it inhibits phosphorylation at Ser-37 (H2BS36ph), thereby blocking expression of pro-adipogenetic genes. Crotonylation (Kcr) is specifically present in male germ cells and marks testis-specific genes in post-meiotic cells, including X-linked genes that escape sex chromosome inactivation in haploid cells. Crotonylation marks active promoters and enhancers and confers resistance to transcriptional repressors. It is also associated with post-meiotically activated genes on autosomes. In terms of processing, lactylated in macrophages by EP300/P300 by using lactoyl-CoA directly derived from endogenous or exogenous lactate, leading to stimulates gene transcription.

It is found in the nucleus. The protein localises to the chromosome. Core component of nucleosome. Nucleosomes wrap and compact DNA into chromatin, limiting DNA accessibility to the cellular machineries which require DNA as a template. Histones thereby play a central role in transcription regulation, DNA repair, DNA replication and chromosomal stability. DNA accessibility is regulated via a complex set of post-translational modifications of histones, also called histone code, and nucleosome remodeling. This chain is Histone H2B type 1-K, found in Macaca fascicularis (Crab-eating macaque).